We begin with the raw amino-acid sequence, 276 residues long: Radial spoke head protein 9 homolog (276 aa).

Belongs to the flagellar radial spoke RSP9 family. Component of the axonemal radial spoke 1 (RS1) and 2 (RS2) complexes, at least composed of spoke head proteins RSPH1, RSPH3, RSPH9 and the cilia-specific component RSPH4A or sperm-specific component RSPH6A, spoke stalk proteins RSPH14, DNAJB13, DYDC1, ROPN1L and NME5, and the RS1 complex-specific anchor protein IQUB. Interacts with IQUB. Interacts with RSPH3B. Interacts with RSPH4A. Interacts with RSPH6A. Interacts with CFAP61. Interacts with LRRC23.

It is found in the cytoplasm. The protein resides in the cytoskeleton. The protein localises to the cilium axoneme. Its subcellular location is the flagellum axoneme. It localises to the cell projection. It is found in the kinocilium. In terms of biological role, functions as part of axonemal radial spoke complexes that play an important part in the motility of sperm and cilia. Essential for both the radial spoke head assembly and the central pair microtubule stability in ependymal motile cilia. Required for motility of olfactory and neural cilia and for the structural integrity of ciliary axonemes in both 9+0 and 9+2 motile cilia. This chain is Radial spoke head protein 9 homolog (RSPH9), found in Homo sapiens (Human).